The primary structure comprises 430 residues: Adenylosuccinate synthetase (430 aa).

GTP is bound by residues 12–18 (GDEGKGK) and 40–42 (GHT). Residue D13 is the Proton acceptor of the active site. 2 residues coordinate Mg(2+): D13 and G40. IMP-binding positions include 13–16 (DEGK), 38–41 (NAGH), T128, R142, Q223, T238, and R302. Residue H41 is the Proton donor of the active site. A substrate-binding site is contributed by 298–304 (TTTGRPR). GTP is bound by residues R304, 330–332 (SID), and 412–414 (SVG).

This sequence belongs to the adenylosuccinate synthetase family. Homodimer. Mg(2+) is required as a cofactor.

It is found in the cytoplasm. The enzyme catalyses IMP + L-aspartate + GTP = N(6)-(1,2-dicarboxyethyl)-AMP + GDP + phosphate + 2 H(+). The protein operates within purine metabolism; AMP biosynthesis via de novo pathway; AMP from IMP: step 1/2. Its function is as follows. Plays an important role in the de novo pathway of purine nucleotide biosynthesis. Catalyzes the first committed step in the biosynthesis of AMP from IMP. The sequence is that of Adenylosuccinate synthetase from Streptococcus equi subsp. zooepidemicus (strain H70).